A 333-amino-acid chain; its full sequence is MLKMLKNLPLPKNITWRSVWMRGTSVVIIFVLAFTLVFTPTFEAEARRSGGRIGGGSFRAPSAPSRSYSGPSGGSYRSGGTYGGGGFGFPFIIPFFGFGGGFGGIFGILVMIAIANVVINAIRNGGGSSGEGGGGLAASSDPQVGIAQIQVGLLASAKELKKELDELALSADTGTANGRSLVLQEATLALLRHPEYWVYGSSQSDKVRLSAAEAAFNQLALTERSKFTDETLSNFNNQLRQGGRATAIGGDSPDAVPDGAGEYILVTIIAAALGNLNLPAVNDSSQLKQSLQTLGGISSDRLLAIEVLWTPQEEGDTLTSNDIISEYPELRLV.

Residues 26–46 (VVIIFVLAFTLVFTPTFEAEA) traverse the membrane as a helical segment. Residues 53–74 (IGGGSFRAPSAPSRSYSGPSGG) are disordered. Residues 58–70 (FRAPSAPSRSYSG) show a composition bias toward low complexity. Transmembrane regions (helical) follow at residues 92 to 112 (IIPFFGFGGGFGGIFGILVMI) and 261 to 281 (GEYILVTIIAAALGNLNLPAV).

This sequence belongs to the FLAP family.

The protein localises to the cellular thylakoid membrane. The protein resides in the cell inner membrane. In terms of biological role, essential for photosynthetic growth under fluctuating light by modulating PxcA- and PxcL-dependent intracellular pH regulation via proton transport (e.g. transient pH reduction upon transition from dark to light followed by an increase in the light until light-to-dark shift). The sequence is that of Protein FLAP1 homolog A from Synechocystis sp. (strain ATCC 27184 / PCC 6803 / Kazusa).